The sequence spans 250 residues: 2,5-dichloro-2,5-cyclohexadiene-1,4-diol dehydrogenase LinX (250 aa).

7 residues coordinate NAD(+): aspartate 38, aspartate 64, valine 65, tyrosine 156, lysine 160, threonine 191, and threonine 194. The active-site Proton acceptor is the tyrosine 156.

The protein belongs to the short-chain dehydrogenases/reductases (SDR) family.

The enzyme catalyses 2,5-dichlorocyclohexa-2,5-dien-1,4-diol + NAD(+) = 2,5-dichlorohydroquinone + NADH + H(+). Its function is as follows. Catalyzes the degradation of 2,5-dichloro-2,5-cyclohexadiene-1,4-diol (2,5-DDOL) into 2,5-dichlorohydroquinone (2,5-DCHQ) in vitro. LinX appears not to be involved in gamma-hexachlorocyclohexane (gamma-HCH) degradation pathway, in contrast to LinC which has the same enzymatic activity. In Sphingobium indicum (strain DSM 16412 / CCM 7286 / MTCC 6364 / B90A), this protein is 2,5-dichloro-2,5-cyclohexadiene-1,4-diol dehydrogenase LinX.